The chain runs to 261 residues: Transmembrane protein 187 (261 aa).

The next 6 membrane-spanning stretches (helical) occupy residues 8–28 (AFVH…TGIF), 43–63 (APVA…VNMA), 88–108 (VFAA…WTQW), 113–133 (VLDQ…CLYL), 140–162 (WLFL…HPQG), and 190–210 (SATY…LKLC).

In terms of tissue distribution, ubiquitous.

It is found in the membrane. The sequence is that of Transmembrane protein 187 (TMEM187) from Homo sapiens (Human).